A 412-amino-acid polypeptide reads, in one-letter code: Transforming growth factor beta-2 proprotein (412 aa).

An N-terminal signal peptide occupies residues 1-20 (MHCYLLSVFLTLDLAAVALS). Residues N72, N139, and N240 are each glycosylated (N-linked (GlcNAc...) asparagine). Intrachain disulfides connect C307–C316, C315–C378, C344–C409, and C348–C411.

This sequence belongs to the TGF-beta family. In terms of assembly, interacts with Transforming growth factor beta-2 (TGF-beta-2) chain; interaction is non-covalent and maintains (TGF-beta-2) in a latent state. As to quaternary structure, homodimer; disulfide-linked. Interacts with TGF-beta receptors (TGFBR1 and TGFBR2), leading to signal transduction. In terms of processing, the precursor proprotein is cleaved in the Golgi apparatus to form Transforming growth factor beta-2 (TGF-beta-2) and Latency-associated peptide (LAP) chains, which remain non-covalently linked, rendering TGF-beta-2 inactive.

The protein localises to the secreted. It is found in the extracellular space. The protein resides in the extracellular matrix. Its function is as follows. Precursor of the Latency-associated peptide (LAP) and Transforming growth factor beta-2 (TGF-beta-2) chains, which constitute the regulatory and active subunit of TGF-beta-2, respectively. Required to maintain the Transforming growth factor beta-2 (TGF-beta-2) chain in a latent state during storage in extracellular matrix. Associates non-covalently with TGF-beta-2 and regulates its activation via interaction with 'milieu molecules', such as LTBP1 and LRRC32/GARP, that control activation of TGF-beta-2. In terms of biological role, multifunctional protein that regulates various processes such as angiogenesis and heart development. Activation into mature form follows different steps: following cleavage of the proprotein in the Golgi apparatus, Latency-associated peptide (LAP) and Transforming growth factor beta-2 (TGF-beta-2) chains remain non-covalently linked rendering TGF-beta-2 inactive during storage in extracellular matrix. At the same time, LAP chain interacts with 'milieu molecules', such as LTBP1 and LRRC32/GARP, that control activation of TGF-beta-2 and maintain it in a latent state during storage in extracellular milieus. Once activated following release of LAP, TGF-beta-2 acts by binding to TGF-beta receptors (TGFBR1 and TGFBR2), which transduce signal. The protein is Transforming growth factor beta-2 proprotein (TGFB2) of Gallus gallus (Chicken).